Consider the following 399-residue polypeptide: Formate-dependent phosphoribosylglycinamide formyltransferase (399 aa).

N(1)-(5-phospho-beta-D-ribosyl)glycinamide contacts are provided by residues 22–23 and glutamate 82; that span reads EL. Residues arginine 114, lysine 155, 160–165, 195–198, and glutamate 203 contribute to the ATP site; these read SSGKGQ and EKMI. An ATP-grasp domain is found at 119–308; the sequence is RLAAETLHLL…EFALHVRAFL (190 aa). Residues glutamate 267 and glutamate 279 each contribute to the Mg(2+) site. N(1)-(5-phospho-beta-D-ribosyl)glycinamide is bound by residues aspartate 286, lysine 355, and 362–363; that span reads RR.

The protein belongs to the PurK/PurT family. As to quaternary structure, homodimer.

The catalysed reaction is N(1)-(5-phospho-beta-D-ribosyl)glycinamide + formate + ATP = N(2)-formyl-N(1)-(5-phospho-beta-D-ribosyl)glycinamide + ADP + phosphate + H(+). It functions in the pathway purine metabolism; IMP biosynthesis via de novo pathway; N(2)-formyl-N(1)-(5-phospho-D-ribosyl)glycinamide from N(1)-(5-phospho-D-ribosyl)glycinamide (formate route): step 1/1. Functionally, involved in the de novo purine biosynthesis. Catalyzes the transfer of formate to 5-phospho-ribosyl-glycinamide (GAR), producing 5-phospho-ribosyl-N-formylglycinamide (FGAR). Formate is provided by PurU via hydrolysis of 10-formyl-tetrahydrofolate. This is Formate-dependent phosphoribosylglycinamide formyltransferase from Proteus mirabilis (strain HI4320).